Here is a 167-residue protein sequence, read N- to C-terminus: Male-specific protein scotti (167 aa).

Residues N30, N124, and N148 are each glycosylated (N-linked (GlcNAc...) asparagine).

It belongs to the male-specific scotti family.

Its function is as follows. Post-meiotically transcribed gene that has a role in late spermiogenesis; required for actin cone progression during spermatid individualization. This chain is Male-specific protein scotti, found in Drosophila ananassae (Fruit fly).